A 568-amino-acid polypeptide reads, in one-letter code: Protein phosphatase 1 regulatory inhibitor subunit 16B (568 aa).

A coiled-coil region spans residues 15 to 55 (EKVPTLERLRAAQKRRAQQLKKWAQYEQDLLHRKRKHERKR). The residue at position 69 (serine 69) is a Phosphoserine. ANK repeat units follow at residues 100–129 (DGLT…NVNA), 133–162 (ELWT…DLLA), 228–257 (QGAT…RVDV), and 261–290 (DGWE…SLSA). Residues serine 333, serine 337, and serine 350 each carry the phosphoserine modification. The tract at residues 373-403 (SAAEDQRTSTYNGDIRETRTDQENKDPNPRL) is disordered. Residues 386–403 (DIRETRTDQENKDPNPRL) are compositionally biased toward basic and acidic residues. At serine 477 the chain carries Phosphoserine. Residues 505-517 (SSVARSGESSSEG) show a composition bias toward low complexity. The disordered stretch occupies residues 505-527 (SSVARSGESSSEGKAPLIGGRTS). One copy of the ANK 5 repeat lies at 531 to 560 (SNGTSVYYTVTSGDPPLLKFKAPMEEMEEK). Cysteine 564 carries S-palmitoyl cysteine lipidation. A Cysteine methyl ester modification is found at cysteine 565. Residue cysteine 565 is the site of S-farnesyl cysteine attachment. A propeptide spans 566-568 (RIS) (removed in mature form).

Interacts with PPP1CA, PPP1CB and MSN. Interacts (via its fourth ankyrin repeat) with the mature dimeric form of RPSA/LAMR1. Interacts with EEF1A1. Interacts with PTEN. Interacts with ECE1. Post-translationally, phosphorylated by PKA and, after PKA priming, by GSK3B. Phosphorylation by GSK3B reduces its association with PP1C and enhances PP1C activity. Dephosphorylation by its associated PP1C results in enhanced association with PP1C, but reduced PP1C activity.

It is found in the cell membrane. It localises to the nucleus. The protein localises to the cell projection. Its function is as follows. Regulator of protein phosphatase 1 (PP1) that acts as a positive regulator of pulmonary endothelial cell (EC) barrier function. Protects the endothelial barrier from lipopolysaccharide (LPS)-induced vascular leakage. Involved in the regulation of the PI3K/AKT signaling pathway. Involved in the regulation of angiogenesis and endothelial cell proliferation through the control of ECE1 dephosphorylation, trafficking and activity. Involved in the regulation of endothelial cell filopodia extension. May be a downstream target for TGF-beta1 signaling cascade in endothelial cells. Involved in PKA-mediated moesin dephosphorylation which is important in EC barrier protection against thrombin stimulation. Promotes the interaction of PPP1CA with RPSA/LAMR1 and in turn facilitates the dephosphorylation of RPSA/LAMR1. Involved in the dephosphorylation of EEF1A1. This Mus musculus (Mouse) protein is Protein phosphatase 1 regulatory inhibitor subunit 16B (Ppp1r16b).